Consider the following 261-residue polypeptide: Class II histocompatibility antigen, M beta 1 chain (261 aa).

A signal peptide spans 1–18; the sequence is MAALWLLLLVLSLHCMGA. Positions 19–112 are beta-1; the sequence is GGFVAHVEST…PFWNALTHRT (94 aa). At 19-218 the chain is on the lumenal side; it reads GGFVAHVEST…PGLSPIQTVK (200 aa). 3 disulfides stabilise this stretch: cysteine 29-cysteine 97, cysteine 43-cysteine 53, and cysteine 135-cysteine 192. An N-linked (GlcNAc...) asparagine glycan is attached at asparagine 75. A beta-2 region spans residues 113-207; it reads RPPSVRVAQT…GTSEPIRGDW (95 aa). An Ig-like C1-type domain is found at 114–204; the sequence is PPSVRVAQTT…QHSGTSEPIR (91 aa). Residues 208–218 are connecting peptide; it reads TPGLSPIQTVK. A helical transmembrane segment spans residues 219–239; it reads VSVSAATLGLGFIIFCVGFFR. The Cytoplasmic portion of the chain corresponds to 240-261; sequence WRKSHSSSYTPLSGSTYPEGRH. A YXXZ motif motif is present at residues 248 to 251; that stretch reads YTPL.

Belongs to the MHC class II family. Heterodimer of an alpha chain (DMA) and a beta chain (DMB). Interacts with MHCII; this interaction mediates rapid selection of high-affinity peptides.

The protein resides in the late endosome membrane. It is found in the lysosome membrane. Plays a critical role in catalyzing the release of class II-associated invariant chain peptide (CLIP) from newly synthesized MHC class II molecules and freeing the peptide binding site for acquisition of antigenic peptides. The polypeptide is Class II histocompatibility antigen, M beta 1 chain (H2-DMb1) (Mus musculus (Mouse)).